The sequence spans 160 residues: Triabin (160 aa).

A signal peptide spans 1–18 (MKTIIAVTIFGILTCAYA). Disulfide bonds link Cys24–Cys128, Cys57–Cys160, and Cys87–Cys102.

This sequence belongs to the calycin superfamily. Triabin family. Expressed in salivary glands.

It localises to the secreted. Functionally, thrombin inhibitor. Forms a non-covalent complex with thrombin at a molar ratio of 1:1. Inhibits thrombin-induced platelet aggregation. Prolongs thrombin clotting time and activated partial thromboplastin time. It only minimally suppresses the amidolytic activity of thrombin. Inhibits thrombin-mediated fibrin formation in the host. Inhibits thrombin-induced endothelium-dependent relaxant and contractile responses in host blood vessels. Inhibits thrombin-induced mitogenesis in host vascular smooth muscle cells. The protein is Triabin of Meccus pallidipennis (Triatomine bug).